Reading from the N-terminus, the 274-residue chain is Prolyl 4-hydroxylase 13 (274 aa).

Residues 1 to 10 (MRSYGKEKKL) lie on the Cytoplasmic side of the membrane. A helical; Signal-anchor for type II membrane protein transmembrane segment spans residues 11–31 (VFPYVFIACCFFLAIFGFCFF). The Lumenal portion of the chain corresponds to 32-274 (NLFSQGISFS…TKWIRDQTYD (243 aa)). The Fe2OG dioxygenase domain maps to 151-270 (YYESFNILRY…KWVATKWIRD (120 aa)). Residues His169 and Asp171 each coordinate Fe cation. A glycan (N-linked (GlcNAc...) asparagine) is linked at Asn242. His251 contributes to the Fe cation binding site. Lys261 serves as a coordination point for 2-oxoglutarate.

Belongs to the P4HA family. The cofactor is Fe(2+). L-ascorbate is required as a cofactor. In terms of tissue distribution, expressed in epidermal root hair cells (trichoblasts) root hairless cells (atrichoblasts).

Its subcellular location is the endoplasmic reticulum membrane. It catalyses the reaction L-prolyl-[collagen] + 2-oxoglutarate + O2 = trans-4-hydroxy-L-prolyl-[collagen] + succinate + CO2. Functionally, catalyzes the post-translational formation of 4-hydroxyproline in -Xaa-Pro-Gly- sequences in proline-rich peptide sequences of plant glycoproteins and other proteins. Hydroxyprolines are important constituent of many plant cell wall glycoproteins such as extensins, hydroxyproline-rich glycoproteins, lectins and arabinogalactan proteins. Possesses high affinity for leucine-rich repeat and proline-rich extensins of root cell walls that are essential for root hair development. Hydroxyprolines define the subsequent O-glycosylation sites by arabinosyltransferases which elongate the O-arabinosides on extensins. This is Prolyl 4-hydroxylase 13 from Arabidopsis thaliana (Mouse-ear cress).